Here is a 455-residue protein sequence, read N- to C-terminus: Probable glycine dehydrogenase (decarboxylating) subunit 1 (455 aa).

Belongs to the GcvP family. N-terminal subunit subfamily. As to quaternary structure, the glycine cleavage system is composed of four proteins: P, T, L and H. In this organism, the P 'protein' is a heterodimer of two subunits.

It carries out the reaction N(6)-[(R)-lipoyl]-L-lysyl-[glycine-cleavage complex H protein] + glycine + H(+) = N(6)-[(R)-S(8)-aminomethyldihydrolipoyl]-L-lysyl-[glycine-cleavage complex H protein] + CO2. In terms of biological role, the glycine cleavage system catalyzes the degradation of glycine. The P protein binds the alpha-amino group of glycine through its pyridoxal phosphate cofactor; CO(2) is released and the remaining methylamine moiety is then transferred to the lipoamide cofactor of the H protein. This chain is Probable glycine dehydrogenase (decarboxylating) subunit 1, found in Francisella tularensis subsp. holarctica (strain FTNF002-00 / FTA).